The sequence spans 311 residues: Putative ribose-phosphate pyrophosphokinase 2 (311 aa).

Residues 38-40 and 97-98 contribute to the ATP site; these read DGE and RQ. 2 residues coordinate Mg(2+): His131 and Asp171. Position 219 (Asp219) interacts with D-ribose 5-phosphate.

This sequence belongs to the ribose-phosphate pyrophosphokinase family. Class I subfamily. As to quaternary structure, homohexamer. It depends on Mg(2+) as a cofactor.

It is found in the cytoplasm. It catalyses the reaction D-ribose 5-phosphate + ATP = 5-phospho-alpha-D-ribose 1-diphosphate + AMP + H(+). It participates in metabolic intermediate biosynthesis; 5-phospho-alpha-D-ribose 1-diphosphate biosynthesis; 5-phospho-alpha-D-ribose 1-diphosphate from D-ribose 5-phosphate (route I): step 1/1. Its function is as follows. Involved in the biosynthesis of the central metabolite phospho-alpha-D-ribosyl-1-pyrophosphate (PRPP) via the transfer of pyrophosphoryl group from ATP to 1-hydroxyl of ribose-5-phosphate (Rib-5-P). The protein is Putative ribose-phosphate pyrophosphokinase 2 of Listeria innocua serovar 6a (strain ATCC BAA-680 / CLIP 11262).